A 361-amino-acid chain; its full sequence is Nicotinate-nucleotide--dimethylbenzimidazole phosphoribosyltransferase (361 aa).

Glu-315 functions as the Proton acceptor in the catalytic mechanism.

It belongs to the CobT family.

The enzyme catalyses 5,6-dimethylbenzimidazole + nicotinate beta-D-ribonucleotide = alpha-ribazole 5'-phosphate + nicotinate + H(+). The protein operates within nucleoside biosynthesis; alpha-ribazole biosynthesis; alpha-ribazole from 5,6-dimethylbenzimidazole: step 1/2. Functionally, catalyzes the synthesis of alpha-ribazole-5'-phosphate from nicotinate mononucleotide (NAMN) and 5,6-dimethylbenzimidazole (DMB). This is Nicotinate-nucleotide--dimethylbenzimidazole phosphoribosyltransferase from Clostridium perfringens (strain 13 / Type A).